An 86-amino-acid polypeptide reads, in one-letter code: Exodeoxyribonuclease 7 small subunit (86 aa).

Belongs to the XseB family. Heterooligomer composed of large and small subunits.

It is found in the cytoplasm. It carries out the reaction Exonucleolytic cleavage in either 5'- to 3'- or 3'- to 5'-direction to yield nucleoside 5'-phosphates.. Its function is as follows. Bidirectionally degrades single-stranded DNA into large acid-insoluble oligonucleotides, which are then degraded further into small acid-soluble oligonucleotides. The sequence is that of Exodeoxyribonuclease 7 small subunit from Xanthomonas euvesicatoria pv. vesicatoria (strain 85-10) (Xanthomonas campestris pv. vesicatoria).